Consider the following 101-residue polypeptide: Putative pterin-4-alpha-carbinolamine dehydratase (101 aa).

The protein belongs to the pterin-4-alpha-carbinolamine dehydratase family.

The enzyme catalyses (4aS,6R)-4a-hydroxy-L-erythro-5,6,7,8-tetrahydrobiopterin = (6R)-L-erythro-6,7-dihydrobiopterin + H2O. This Rhodopseudomonas palustris (strain HaA2) protein is Putative pterin-4-alpha-carbinolamine dehydratase.